A 72-amino-acid chain; its full sequence is Putative D-serine transporter DsdX-like protein (72 aa).

The sequence is that of Putative D-serine transporter DsdX-like protein (dsdX) from Escherichia coli O157:H7.